The following is a 332-amino-acid chain: Glycerol-3-phosphate dehydrogenase [NAD(P)+] (332 aa).

The NADPH site is built by Trp15, Arg35, and Lys108. The sn-glycerol 3-phosphate site is built by Lys108, Gly137, and Ser139. Ala141 lines the NADPH pocket. Residues Lys192, Asp245, Ser255, Arg256, and Asn257 each coordinate sn-glycerol 3-phosphate. The Proton acceptor role is filled by Lys192. Arg256 contributes to the NADPH binding site. NADPH-binding residues include Leu278 and Glu280.

This sequence belongs to the NAD-dependent glycerol-3-phosphate dehydrogenase family.

It localises to the cytoplasm. It carries out the reaction sn-glycerol 3-phosphate + NAD(+) = dihydroxyacetone phosphate + NADH + H(+). The enzyme catalyses sn-glycerol 3-phosphate + NADP(+) = dihydroxyacetone phosphate + NADPH + H(+). Its pathway is membrane lipid metabolism; glycerophospholipid metabolism. Catalyzes the reduction of the glycolytic intermediate dihydroxyacetone phosphate (DHAP) to sn-glycerol 3-phosphate (G3P), the key precursor for phospholipid synthesis. The protein is Glycerol-3-phosphate dehydrogenase [NAD(P)+] of Methylobacterium radiotolerans (strain ATCC 27329 / DSM 1819 / JCM 2831 / NBRC 15690 / NCIMB 10815 / 0-1).